Consider the following 288-residue polypeptide: Light-independent protochlorophyllide reductase iron-sulfur ATP-binding protein (288 aa).

Residues 10–15 (GIGKST) and Lys-39 contribute to the ATP site. Residue Ser-14 participates in Mg(2+) binding. Cys-95 and Cys-129 together coordinate [4Fe-4S] cluster. Position 180-181 (180-181 (NR)) interacts with ATP.

The protein belongs to the NifH/BchL/ChlL family. As to quaternary structure, homodimer. Protochlorophyllide reductase is composed of three subunits; ChlL, ChlN and ChlB. It depends on [4Fe-4S] cluster as a cofactor.

It catalyses the reaction chlorophyllide a + oxidized 2[4Fe-4S]-[ferredoxin] + 2 ADP + 2 phosphate = protochlorophyllide a + reduced 2[4Fe-4S]-[ferredoxin] + 2 ATP + 2 H2O. The protein operates within porphyrin-containing compound metabolism; chlorophyll biosynthesis (light-independent). Its function is as follows. Component of the dark-operative protochlorophyllide reductase (DPOR) that uses Mg-ATP and reduced ferredoxin to reduce ring D of protochlorophyllide (Pchlide) to form chlorophyllide a (Chlide). This reaction is light-independent. The L component serves as a unique electron donor to the NB-component of the complex, and binds Mg-ATP. The sequence is that of Light-independent protochlorophyllide reductase iron-sulfur ATP-binding protein from Nostoc punctiforme (strain ATCC 29133 / PCC 73102).